A 133-amino-acid chain; its full sequence is MNRKLSREKAMELLFGMTLNTDNCEETLGNFIDNYESDIKELDITYIKRILIGVENNKDNIDEAISKNLCNWKIDRISKVNLCILRLAVYELLHDEEIPNRVAINEALEITKKYSDEKSVSFINGVLDNILKK.

The protein belongs to the NusB family.

In terms of biological role, involved in transcription antitermination. Required for transcription of ribosomal RNA (rRNA) genes. Binds specifically to the boxA antiterminator sequence of the ribosomal RNA (rrn) operons. This is Transcription antitermination protein NusB from Clostridium botulinum (strain Alaska E43 / Type E3).